Here is a 243-residue protein sequence, read N- to C-terminus: 7-carboxy-7-deazaguanine synthase (243 aa).

Substrate-binding positions include 15-17 and Arg30; that span reads IQG. In terms of domain architecture, Radical SAM core spans 21-239; sequence VIGQKTMFVR…PQLHTLLWGN (219 aa). Cys34, Cys38, and Cys41 together coordinate [4Fe-4S] cluster. Ser43 lines the Mg(2+) pocket. A substrate-binding site is contributed by Ser81. S-adenosyl-L-methionine-binding positions include Gly83 and 127–129; that span reads SPK.

This sequence belongs to the radical SAM superfamily. 7-carboxy-7-deazaguanine synthase family. As to quaternary structure, homodimer. [4Fe-4S] cluster is required as a cofactor. S-adenosyl-L-methionine serves as cofactor. It depends on Mg(2+) as a cofactor.

The enzyme catalyses 6-carboxy-5,6,7,8-tetrahydropterin + H(+) = 7-carboxy-7-deazaguanine + NH4(+). It participates in purine metabolism; 7-cyano-7-deazaguanine biosynthesis. Its function is as follows. Catalyzes the complex heterocyclic radical-mediated conversion of 6-carboxy-5,6,7,8-tetrahydropterin (CPH4) to 7-carboxy-7-deazaguanine (CDG), a step common to the biosynthetic pathways of all 7-deazapurine-containing compounds. The sequence is that of 7-carboxy-7-deazaguanine synthase from Bacillus subtilis (strain 168).